We begin with the raw amino-acid sequence, 193 residues long: Protein GrpE (193 aa).

The tract at residues 1-40 (MTEENRPQPDQPELTVTSESSVQETGENKARTPEQEGEAM) is disordered. The segment covering 14-25 (LTVTSESSVQET) has biased composition (polar residues).

The protein belongs to the GrpE family. In terms of assembly, homodimer.

The protein localises to the cytoplasm. Functionally, participates actively in the response to hyperosmotic and heat shock by preventing the aggregation of stress-denatured proteins, in association with DnaK and GrpE. It is the nucleotide exchange factor for DnaK and may function as a thermosensor. Unfolded proteins bind initially to DnaJ; upon interaction with the DnaJ-bound protein, DnaK hydrolyzes its bound ATP, resulting in the formation of a stable complex. GrpE releases ADP from DnaK; ATP binding to DnaK triggers the release of the substrate protein, thus completing the reaction cycle. Several rounds of ATP-dependent interactions between DnaJ, DnaK and GrpE are required for fully efficient folding. The protein is Protein GrpE of Nitrosospira multiformis (strain ATCC 25196 / NCIMB 11849 / C 71).